Reading from the N-terminus, the 289-residue chain is MSSSVTNKSLDSLTLSAVSINGPSSTASSTHSNYTTQHSNQDYFSIKPKLKVSISNEISSTRSSEIIPGNPLLFSPLDCTNSEMDEEDDFEDDEDDENLGLINPLHHKSSHGQISDYSPLTPFTEPPSASLSKPSFTSHSPVSENIDINLVIRRKSANPATYNFLIVDDNIINIKILERILFKLYPNCNIKKLQDPTKVANAIKTHKFDVVFLDIEMPEITGVDISREMRQQPVFNSVGIIAVTTRTMAHDLLVYETVGIDYTFAKPLTYNYDFVMDRIDEVIRNRIST.

The interval 77 to 136 (LDCTNSEMDEEDDFEDDEDDENLGLINPLHHKSSHGQISDYSPLTPFTEPPSASLSKPSF) is disordered. The span at 83–98 (EMDEEDDFEDDEDDEN) shows a compositional bias: acidic residues. Residues 127–136 (PSASLSKPSF) are compositionally biased toward polar residues. Residues 163 to 281 (NFLIVDDNII…YDFVMDRIDE (119 aa)) form the Response regulatory domain. Aspartate 214 carries the post-translational modification 4-aspartylphosphate.

In terms of biological role, required for stress adaptation, morphogenesis and virulence. This Scheffersomyces stipitis (strain ATCC 58785 / CBS 6054 / NBRC 10063 / NRRL Y-11545) (Yeast) protein is Stress response regulator protein 1 (SRR1).